Reading from the N-terminus, the 530-residue chain is Autoinducer-2 kinase (530 aa).

This sequence belongs to the FGGY kinase family.

It is found in the cytoplasm. The enzyme catalyses (S)-4,5-dihydroxypentane-2,3-dione + ATP = (2S)-2-hydroxy-3,4-dioxopentyl phosphate + ADP + H(+). Functionally, catalyzes the phosphorylation of autoinducer-2 (AI-2) to phospho-AI-2, which subsequently inactivates the transcriptional regulator LsrR and leads to the transcription of the lsr operon. Phosphorylates the ring-open form of (S)-4,5-dihydroxypentane-2,3-dione (DPD), which is the precursor to all AI-2 signaling molecules, at the C5 position. This chain is Autoinducer-2 kinase, found in Salmonella choleraesuis (strain SC-B67).